A 250-amino-acid polypeptide reads, in one-letter code: 5'-nucleotidase SurE (250 aa).

Residues D8, D9, S39, and N95 each coordinate a divalent metal cation.

Belongs to the SurE nucleotidase family. A divalent metal cation is required as a cofactor.

Its subcellular location is the cytoplasm. The catalysed reaction is a ribonucleoside 5'-phosphate + H2O = a ribonucleoside + phosphate. Its function is as follows. Nucleotidase that shows phosphatase activity on nucleoside 5'-monophosphates. In Cupriavidus pinatubonensis (strain JMP 134 / LMG 1197) (Cupriavidus necator (strain JMP 134)), this protein is 5'-nucleotidase SurE.